Here is a 759-residue protein sequence, read N- to C-terminus: 1,4-alpha-glucan branching enzyme GlgB (759 aa).

The interval 1–22 is disordered; that stretch reads MAKTKGLPKDTAVTPSPHLRPH. The active-site Nucleophile is D422. The active-site Proton donor is E475.

The protein belongs to the glycosyl hydrolase 13 family. GlgB subfamily. As to quaternary structure, monomer.

It carries out the reaction Transfers a segment of a (1-&gt;4)-alpha-D-glucan chain to a primary hydroxy group in a similar glucan chain.. Its pathway is glycan biosynthesis; glycogen biosynthesis. Its function is as follows. Catalyzes the formation of the alpha-1,6-glucosidic linkages in glycogen by scission of a 1,4-alpha-linked oligosaccharide from growing alpha-1,4-glucan chains and the subsequent attachment of the oligosaccharide to the alpha-1,6 position. This Mycobacterium sp. (strain KMS) protein is 1,4-alpha-glucan branching enzyme GlgB.